Reading from the N-terminus, the 356-residue chain is Sterol-4-alpha-carboxylate 3-dehydrogenase, decarboxylating (356 aa).

M1 carries the post-translational modification N-acetylmethionine. Y155 acts as the Proton acceptor in catalysis. K159 contributes to the NAD(+) binding site. A helical membrane pass occupies residues W281 to I301. The short motif at R353–M356 is the Prevents secretion from ER element.

It belongs to the 3-beta-HSD family. In terms of assembly, homodimer.

It is found in the endoplasmic reticulum membrane. The protein localises to the lipid droplet. It carries out the reaction a 3beta-hydroxysteroid-4alpha-carboxylate + NADP(+) = a 3-oxosteroid + CO2 + NADPH. The catalysed reaction is a 3beta-hydroxysteroid-4alpha-carboxylate + NAD(+) = a 3-oxosteroid + CO2 + NADH. The enzyme catalyses 4alpha-carboxyzymosterol + NADP(+) = zymosterone + CO2 + NADPH. It catalyses the reaction 4alpha-carboxy-4beta-methyl-5alpha-cholest-8-en-3beta-ol + NADP(+) = 4alpha-methyl-5alpha-cholest-8-en-3-one + CO2 + NADPH. It carries out the reaction 4alpha-carboxy-5alpha-cholest-8-ene-3beta-ol + NADP(+) = 5alpha-cholest-8-en-3-one + CO2 + NADPH. The catalysed reaction is 4beta-methylzymosterol-4alpha-carboxylate + NADP(+) = 3-dehydro-4-methylzymosterol + CO2 + NADPH. The enzyme catalyses 4beta-methylzymosterol-4alpha-carboxylate + NAD(+) = 3-dehydro-4-methylzymosterol + CO2 + NADH. It catalyses the reaction 4alpha-carboxy-5alpha-cholest-8-ene-3beta-ol + NAD(+) = 5alpha-cholest-8-en-3-one + CO2 + NADH. It carries out the reaction 4alpha-carboxy-4beta-methyl-5alpha-cholest-8-en-3beta-ol + NAD(+) = 4alpha-methyl-5alpha-cholest-8-en-3-one + CO2 + NADH. The catalysed reaction is 4alpha-carboxyzymosterol + NAD(+) = zymosterone + CO2 + NADH. The protein operates within steroid biosynthesis; zymosterol biosynthesis; zymosterol from lanosterol: step 4/6. Its function is as follows. Catalyzes the NAD(P)(+)-dependent oxidative decarboxylation of the C4 methyl groups of 4-alpha-carboxysterols in post-squalene cholesterol biosynthesis. Also plays a role in the regulation of the endocytic trafficking of EGFR. This Bos taurus (Bovine) protein is Sterol-4-alpha-carboxylate 3-dehydrogenase, decarboxylating (NSDHL).